The primary structure comprises 459 residues: Ribulose bisphosphate carboxylase large chain (459 aa).

Position 4 is an N6,N6,N6-trimethyllysine (Lys-4). Substrate is bound by residues Asn-113 and Thr-163. Residue Lys-165 is the Proton acceptor of the active site. Lys-167 provides a ligand contact to substrate. Positions 191, 193, and 194 each coordinate Mg(2+). The residue at position 191 (Lys-191) is an N6-carboxylysine. The Proton acceptor role is filled by His-284. Substrate-binding residues include Arg-285, His-317, and Ser-369.

This sequence belongs to the RuBisCO large chain family. Type I subfamily. Heterohexadecamer of 8 large chains and 8 small chains; disulfide-linked. The disulfide link is formed within the large subunit homodimers. Mg(2+) is required as a cofactor. Post-translationally, the disulfide bond which can form in the large chain dimeric partners within the hexadecamer appears to be associated with oxidative stress and protein turnover.

It is found in the plastid. It localises to the chloroplast. It catalyses the reaction 2 (2R)-3-phosphoglycerate + 2 H(+) = D-ribulose 1,5-bisphosphate + CO2 + H2O. The catalysed reaction is D-ribulose 1,5-bisphosphate + O2 = 2-phosphoglycolate + (2R)-3-phosphoglycerate + 2 H(+). RuBisCO catalyzes two reactions: the carboxylation of D-ribulose 1,5-bisphosphate, the primary event in carbon dioxide fixation, as well as the oxidative fragmentation of the pentose substrate in the photorespiration process. Both reactions occur simultaneously and in competition at the same active site. The chain is Ribulose bisphosphate carboxylase large chain from Cephalotus follicularis (Albany pitcher plant).